A 331-amino-acid chain; its full sequence is Methionyl-tRNA formyltransferase (331 aa).

111–114 (SLLP) provides a ligand contact to (6S)-5,6,7,8-tetrahydrofolate.

This sequence belongs to the Fmt family.

The catalysed reaction is L-methionyl-tRNA(fMet) + (6R)-10-formyltetrahydrofolate = N-formyl-L-methionyl-tRNA(fMet) + (6S)-5,6,7,8-tetrahydrofolate + H(+). Functionally, attaches a formyl group to the free amino group of methionyl-tRNA(fMet). The formyl group appears to play a dual role in the initiator identity of N-formylmethionyl-tRNA by promoting its recognition by IF2 and preventing the misappropriation of this tRNA by the elongation apparatus. The sequence is that of Methionyl-tRNA formyltransferase from Thermosynechococcus vestitus (strain NIES-2133 / IAM M-273 / BP-1).